The chain runs to 784 residues: ATP-dependent 6-phosphofructokinase, platelet type (784 aa).

N-acetylmethionine is present on methionine 1. The tract at residues 1-398 (MSDLDSSSSS…NLNTYKRLAI (398 aa)) is N-terminal catalytic PFK domain 1. Serine 2, serine 6, and serine 20 each carry phosphoserine. ATP-binding positions include glycine 33, 96 to 97 (RC), and 126 to 129 (GDGS). Residue aspartate 127 participates in Mg(2+) binding. Serine 141 carries the phosphoserine modification. Residues 172–174 (SID), arginine 209, 216–218 (MGR), glutamate 272, arginine 300, and 306–309 (HVQR) contribute to the substrate site. The active-site Proton acceptor is the aspartate 174. At lysine 394 the chain carries N6-acetyllysine. The segment at 399-410 (KLPDEKIVKSNC) is interdomain linker. Residues 411-784 (NVAVINVGAP…LESLQHHEEL (374 aa)) form a C-terminal regulatory PFK domain 2 region. Arginine 480 contributes to the beta-D-fructose 2,6-bisphosphate binding site. The residue at position 485 (lysine 485) is an N6-acetyllysine. Residues 537–541 (TVSNN), arginine 575, 582–584 (MGG), and glutamate 638 contribute to the beta-D-fructose 2,6-bisphosphate site. An O-linked (GlcNAc) serine glycan is attached at serine 539. A Phosphotyrosine modification is found at tyrosine 650. Beta-D-fructose 2,6-bisphosphate is bound by residues arginine 664 and 670–673 (HMQQ). Residue lysine 687 is modified to N6-acetyllysine. Arginine 743 provides a ligand contact to beta-D-fructose 2,6-bisphosphate.

The protein belongs to the phosphofructokinase type A (PFKA) family. ATP-dependent PFK group I subfamily. Eukaryotic two domain clade 'E' sub-subfamily. In terms of assembly, homo- and heterotetramers. Phosphofructokinase (PFK) enzyme functions as a tetramer composed of different combinations of 3 types of subunits, called PFKM (M), PFKL (L) and PFKP (P). The composition of the PFK tetramer differs according to the tissue type it is present in. The kinetic and regulatory properties of the tetrameric enzyme are dependent on the subunit composition, hence can vary across tissues. Interacts with ATG4B; promoting phosphorylation of ATG4B. It depends on Mg(2+) as a cofactor. Post-translationally, glcNAcylation decreases enzyme activity. In terms of tissue distribution, expression is constant during tumor growth and markedly decreases when cell proliferation stops.

It is found in the cytoplasm. The enzyme catalyses beta-D-fructose 6-phosphate + ATP = beta-D-fructose 1,6-bisphosphate + ADP + H(+). Its pathway is carbohydrate degradation; glycolysis; D-glyceraldehyde 3-phosphate and glycerone phosphate from D-glucose: step 3/4. With respect to regulation, allosterically activated by ADP, AMP, or fructose 2,6-bisphosphate, and allosterically inhibited by ATP or citrate. Functionally, catalyzes the phosphorylation of D-fructose 6-phosphate to fructose 1,6-bisphosphate by ATP, the first committing step of glycolysis. The sequence is that of ATP-dependent 6-phosphofructokinase, platelet type (Pfkp) from Mus musculus (Mouse).